Consider the following 260-residue polypeptide: Chlorocatechol 1,2-dioxygenase (260 aa).

4 residues coordinate Fe cation: Tyr-130, Tyr-164, His-188, and His-190.

Belongs to the intradiol ring-cleavage dioxygenase family. Fe(3+) is required as a cofactor.

It carries out the reaction 3-chlorocatechol + O2 = (2E,4Z)-2-chloromuconate + 2 H(+). It catalyses the reaction 3,5-dichlorocatechol + O2 = (2E,4E)-2,4-dichloromuconate + 2 H(+). It functions in the pathway aromatic compound metabolism; 3-chlorocatechol degradation. In terms of biological role, preferentially converts 3-chlorocatechol and 3,5-dichlorocatechol as opposed to other chlorinated catechols. Retains diminished activity toward non-chlorinated substrates. This is Chlorocatechol 1,2-dioxygenase (clcA) from Pseudomonas putida (Arthrobacter siderocapsulatus).